A 580-amino-acid chain; its full sequence is Benzoate--CoA ligase, peroxisomal (580 aa).

The Microbody targeting signal signature appears at 578–580 (SRL).

This sequence belongs to the ATP-dependent AMP-binding enzyme family.

It localises to the peroxisome. It catalyses the reaction benzoate + ATP + CoA = benzoyl-CoA + AMP + diphosphate. Its function is as follows. Benzoate--CoA ligase involved in benzoyloxyglucosinolate biosynthesis in seeds. Glucosinolates are secondary metabolites involved in pathogen and insect defense of cruciferous plants. This chain is Benzoate--CoA ligase, peroxisomal (AAE20), found in Arabidopsis thaliana (Mouse-ear cress).